Here is a 434-residue protein sequence, read N- to C-terminus: Enolase (434 aa).

Q163 is a binding site for (2R)-2-phosphoglycerate. E205 (proton donor) is an active-site residue. Mg(2+)-binding residues include D242, E291, and D318. Residues K343, R372, S373, and K394 each coordinate (2R)-2-phosphoglycerate. K343 functions as the Proton acceptor in the catalytic mechanism.

The protein belongs to the enolase family. Mg(2+) serves as cofactor.

It localises to the cytoplasm. Its subcellular location is the secreted. It is found in the cell surface. The enzyme catalyses (2R)-2-phosphoglycerate = phosphoenolpyruvate + H2O. The protein operates within carbohydrate degradation; glycolysis; pyruvate from D-glyceraldehyde 3-phosphate: step 4/5. Functionally, catalyzes the reversible conversion of 2-phosphoglycerate (2-PG) into phosphoenolpyruvate (PEP). It is essential for the degradation of carbohydrates via glycolysis. The chain is Enolase from Streptococcus thermophilus (strain CNRZ 1066).